A 69-amino-acid polypeptide reads, in one-letter code: Protein transport protein Sec61 subunit gamma (69 aa).

Residues 1-32 are Cytoplasmic-facing; it reads MDAVDSVVDPLREFAKDSVRLVKRCHKPDRKE. A helical transmembrane segment spans residues 33–61; the sequence is FTKVAARTAIGFVVMGFVGFFVKLIFIPI. The Extracellular portion of the chain corresponds to 62 to 69; it reads NNIIVGSG.

It belongs to the SecE/SEC61-gamma family. As to quaternary structure, heterotrimeric complex composed of SEC61-alpha, SEC61-beta and SEC61-gamma.

Its subcellular location is the endoplasmic reticulum membrane. Its function is as follows. Necessary for protein translocation in the endoplasmic reticulum. The sequence is that of Protein transport protein Sec61 subunit gamma from Oryza sativa subsp. japonica (Rice).